A 488-amino-acid chain; its full sequence is Glutamyl-tRNA(Gln) amidotransferase subunit A (488 aa).

Catalysis depends on charge relay system residues Lys77 and Ser152. Catalysis depends on Ser176, which acts as the Acyl-ester intermediate.

It belongs to the amidase family. GatA subfamily. In terms of assembly, heterotrimer of A, B and C subunits.

The catalysed reaction is L-glutamyl-tRNA(Gln) + L-glutamine + ATP + H2O = L-glutaminyl-tRNA(Gln) + L-glutamate + ADP + phosphate + H(+). Its function is as follows. Allows the formation of correctly charged Gln-tRNA(Gln) through the transamidation of misacylated Glu-tRNA(Gln) in organisms which lack glutaminyl-tRNA synthetase. The reaction takes place in the presence of glutamine and ATP through an activated gamma-phospho-Glu-tRNA(Gln). This chain is Glutamyl-tRNA(Gln) amidotransferase subunit A, found in Streptococcus pyogenes serotype M3 (strain ATCC BAA-595 / MGAS315).